The chain runs to 116 residues: Iron-sulfur cluster insertion protein ErpA (116 aa).

Iron-sulfur cluster contacts are provided by Cys44, Cys108, and Cys110.

The protein belongs to the HesB/IscA family. As to quaternary structure, homodimer. Iron-sulfur cluster serves as cofactor.

In terms of biological role, required for insertion of 4Fe-4S clusters for at least IspG. The chain is Iron-sulfur cluster insertion protein ErpA from Shewanella amazonensis (strain ATCC BAA-1098 / SB2B).